The primary structure comprises 528 residues: GMP synthase [glutamine-hydrolyzing] (528 aa).

Residues 13–204 (SILILDFGSQ…VYSIAKCKAD (192 aa)) form the Glutamine amidotransferase type-1 domain. The active-site Nucleophile is C90. Active-site residues include H178 and E180. The region spanning 205-403 (WTTETFLEET…LGLPDEIIKR (199 aa)) is the GMPS ATP-PPase domain. 232-238 (SGGVDSS) contributes to the ATP binding site.

As to quaternary structure, homodimer.

It catalyses the reaction XMP + L-glutamine + ATP + H2O = GMP + L-glutamate + AMP + diphosphate + 2 H(+). Its pathway is purine metabolism; GMP biosynthesis; GMP from XMP (L-Gln route): step 1/1. Its function is as follows. Catalyzes the synthesis of GMP from XMP. The chain is GMP synthase [glutamine-hydrolyzing] from Prochlorococcus marinus subsp. pastoris (strain CCMP1986 / NIES-2087 / MED4).